A 127-amino-acid polypeptide reads, in one-letter code: Holo-[acyl-carrier-protein] synthase (127 aa).

Mg(2+) contacts are provided by aspartate 9 and glutamate 58.

This sequence belongs to the P-Pant transferase superfamily. AcpS family. The cofactor is Mg(2+).

The protein localises to the cytoplasm. The enzyme catalyses apo-[ACP] + CoA = holo-[ACP] + adenosine 3',5'-bisphosphate + H(+). In terms of biological role, transfers the 4'-phosphopantetheine moiety from coenzyme A to a Ser of acyl-carrier-protein. In Shewanella oneidensis (strain ATCC 700550 / JCM 31522 / CIP 106686 / LMG 19005 / NCIMB 14063 / MR-1), this protein is Holo-[acyl-carrier-protein] synthase.